The following is a 207-amino-acid chain: Adenylyl-sulfate kinase (207 aa).

34–41 serves as a coordination point for ATP; it reads GLSGSGKS. Ser108 functions as the Phosphoserine intermediate in the catalytic mechanism.

This sequence belongs to the APS kinase family.

It catalyses the reaction adenosine 5'-phosphosulfate + ATP = 3'-phosphoadenylyl sulfate + ADP + H(+). It functions in the pathway sulfur metabolism; hydrogen sulfide biosynthesis; sulfite from sulfate: step 2/3. Its function is as follows. Catalyzes the synthesis of activated sulfate. The chain is Adenylyl-sulfate kinase from Lactiplantibacillus plantarum (strain ATCC BAA-793 / NCIMB 8826 / WCFS1) (Lactobacillus plantarum).